The following is a 142-amino-acid chain: MAAVESVQCFGRKKTAVAVTYCRRGRGLIRLTVPIELVEPEILRYKAFEPVLLLGRSKFAGVDMRIRVKGGGNTSQIYAIRQSIAKALVAYFQKYVDEQSKKEIKDVLLRYDRTLLVADPRRCEPKKFGGRGARSRFQKSYR.

The protein belongs to the universal ribosomal protein uS9 family.

It is found in the cytoplasm. This is Small ribosomal subunit protein uS9 (RPS16) from Syntrichia ruralis (Great hairy screw-moss).